We begin with the raw amino-acid sequence, 210 residues long: Na(+)-translocating NADH-quinone reductase subunit D (210 aa).

6 helical membrane-spanning segments follow: residues P14–V34, L42–I62, I72–A92, V103–M123, F131–V151, and N178–I198.

This sequence belongs to the NqrDE/RnfAE family. As to quaternary structure, composed of six subunits; NqrA, NqrB, NqrC, NqrD, NqrE and NqrF.

Its subcellular location is the cell inner membrane. The enzyme catalyses a ubiquinone + n Na(+)(in) + NADH + H(+) = a ubiquinol + n Na(+)(out) + NAD(+). NQR complex catalyzes the reduction of ubiquinone-1 to ubiquinol by two successive reactions, coupled with the transport of Na(+) ions from the cytoplasm to the periplasm. NqrA to NqrE are probably involved in the second step, the conversion of ubisemiquinone to ubiquinol. The sequence is that of Na(+)-translocating NADH-quinone reductase subunit D from Shewanella loihica (strain ATCC BAA-1088 / PV-4).